The primary structure comprises 270 residues: uncharacterized protein (270 aa).

Positions 1–23 are cleaved as a signal peptide; that stretch reads MFNFITFILFAVVCISYCHKSRG. N-linked (GlcNAc...) asparagine glycosylation is found at Asn246 and Asn252.

It localises to the secreted. This is an uncharacterized protein from Caenorhabditis elegans.